The primary structure comprises 255 residues: Thiazole synthase (255 aa).

The Schiff-base intermediate with DXP role is filled by lysine 96. 1-deoxy-D-xylulose 5-phosphate-binding positions include glycine 157, alanine 183–glycine 184, and asparagine 205–threonine 206.

It belongs to the ThiG family. As to quaternary structure, homotetramer. Forms heterodimers with either ThiH or ThiS.

It localises to the cytoplasm. The catalysed reaction is [ThiS sulfur-carrier protein]-C-terminal-Gly-aminoethanethioate + 2-iminoacetate + 1-deoxy-D-xylulose 5-phosphate = [ThiS sulfur-carrier protein]-C-terminal Gly-Gly + 2-[(2R,5Z)-2-carboxy-4-methylthiazol-5(2H)-ylidene]ethyl phosphate + 2 H2O + H(+). Its pathway is cofactor biosynthesis; thiamine diphosphate biosynthesis. Catalyzes the rearrangement of 1-deoxy-D-xylulose 5-phosphate (DXP) to produce the thiazole phosphate moiety of thiamine. Sulfur is provided by the thiocarboxylate moiety of the carrier protein ThiS. In vitro, sulfur can be provided by H(2)S. The chain is Thiazole synthase from Staphylococcus epidermidis (strain ATCC 12228 / FDA PCI 1200).